The chain runs to 81 residues: Small ribosomal subunit protein bS18 (81 aa).

This sequence belongs to the bacterial ribosomal protein bS18 family. In terms of assembly, part of the 30S ribosomal subunit. Forms a tight heterodimer with protein bS6.

In terms of biological role, binds as a heterodimer with protein bS6 to the central domain of the 16S rRNA, where it helps stabilize the platform of the 30S subunit. This Syntrophobacter fumaroxidans (strain DSM 10017 / MPOB) protein is Small ribosomal subunit protein bS18.